The sequence spans 492 residues: Ketol-acid reductoisomerase (NADP(+)) (492 aa).

The 192-residue stretch at L17–S208 folds into the KARI N-terminal Rossmann domain. NADP(+) is bound by residues C45–Q48, R68, R76, S78, and D108–Q110. H132 is a catalytic residue. G158 serves as a coordination point for NADP(+). KARI C-terminal knotted domains are found at residues S209–E353 and Y354–M487. Residues D217, E221, E389, and E393 each contribute to the Mg(2+) site. A substrate-binding site is contributed by S414.

The protein belongs to the ketol-acid reductoisomerase family. The cofactor is Mg(2+).

The catalysed reaction is (2R)-2,3-dihydroxy-3-methylbutanoate + NADP(+) = (2S)-2-acetolactate + NADPH + H(+). The enzyme catalyses (2R,3R)-2,3-dihydroxy-3-methylpentanoate + NADP(+) = (S)-2-ethyl-2-hydroxy-3-oxobutanoate + NADPH + H(+). It functions in the pathway amino-acid biosynthesis; L-isoleucine biosynthesis; L-isoleucine from 2-oxobutanoate: step 2/4. The protein operates within amino-acid biosynthesis; L-valine biosynthesis; L-valine from pyruvate: step 2/4. Involved in the biosynthesis of branched-chain amino acids (BCAA). Catalyzes an alkyl-migration followed by a ketol-acid reduction of (S)-2-acetolactate (S2AL) to yield (R)-2,3-dihydroxy-isovalerate. In the isomerase reaction, S2AL is rearranged via a Mg-dependent methyl migration to produce 3-hydroxy-3-methyl-2-ketobutyrate (HMKB). In the reductase reaction, this 2-ketoacid undergoes a metal-dependent reduction by NADPH to yield (R)-2,3-dihydroxy-isovalerate. This is Ketol-acid reductoisomerase (NADP(+)) from Cytophaga hutchinsonii (strain ATCC 33406 / DSM 1761 / CIP 103989 / NBRC 15051 / NCIMB 9469 / D465).